Reading from the N-terminus, the 215-residue chain is 3-isopropylmalate dehydratase small subunit (215 aa).

Belongs to the LeuD family. LeuD type 1 subfamily. In terms of assembly, heterodimer of LeuC and LeuD.

It catalyses the reaction (2R,3S)-3-isopropylmalate = (2S)-2-isopropylmalate. The protein operates within amino-acid biosynthesis; L-leucine biosynthesis; L-leucine from 3-methyl-2-oxobutanoate: step 2/4. Its function is as follows. Catalyzes the isomerization between 2-isopropylmalate and 3-isopropylmalate, via the formation of 2-isopropylmaleate. This chain is 3-isopropylmalate dehydratase small subunit, found in Stutzerimonas stutzeri (strain A1501) (Pseudomonas stutzeri).